Consider the following 365-residue polypeptide: tRNA(Met) cytidine acetate ligase (365 aa).

Residues 7 to 20, G96, N152, and R175 contribute to the ATP site; that span reads IAEF…HKYL.

This sequence belongs to the TmcAL family.

Its subcellular location is the cytoplasm. It catalyses the reaction cytidine(34) in elongator tRNA(Met) + acetate + ATP = N(4)-acetylcytidine(34) in elongator tRNA(Met) + AMP + diphosphate. In terms of biological role, catalyzes the formation of N(4)-acetylcytidine (ac(4)C) at the wobble position of elongator tRNA(Met), using acetate and ATP as substrates. First activates an acetate ion to form acetyladenylate (Ac-AMP) and then transfers the acetyl group to tRNA to form ac(4)C34. This Streptococcus pneumoniae (strain ATCC 700669 / Spain 23F-1) protein is tRNA(Met) cytidine acetate ligase.